We begin with the raw amino-acid sequence, 307 residues long: Alginate lyase (307 aa).

The N-terminal stretch at 1-20 (MLKSGVMVASLCLFSVPSRA) is a signal peptide.

The protein belongs to the polysaccharide lyase 7 family.

The protein resides in the secreted. The catalysed reaction is Eliminative cleavage of alginate to give oligosaccharides with 4-deoxy-alpha-L-erythro-hex-4-enuronosyl groups at their non-reducing ends and beta-D-mannuronate at their reducing end.. Degrades alginates that contain guluronic acid. The protein is Alginate lyase (alyA) of Klebsiella pneumoniae.